The primary structure comprises 376 residues: Penicillin V acylase (376 aa).

The first 29 residues, 1–29 (MIKNNKRIKSTVCALSLVALTLGSAVSLA), serve as a signal peptide directing secretion. Residue cysteine 30 is the Nucleophile of the active site.

Belongs to the peptidase C59 family. As to quaternary structure, homotetramer. Dimer of dimers.

The protein localises to the periplasm. The catalysed reaction is a penicillin + H2O = 6-aminopenicillanate + a carboxylate. Exhibits uncharacteristic kinetic behavior, showing positive cooperativity coupled with substrate inhibition. Penicillin acylase activity is enhanced in the presence of the reducing agent DTT, indicating active sulfhydryl group in the enzyme. Also shows enhanced activity in presence of organic solvents and detergents. Inhibited largely in presence of Ag(+), Hg(2+) and Cd(2+) ions, which have strong affinities for sulfhydryl groups. Activity is also inhibited by bile salts. Functionally, catalyzes the hydrolysis of penicillin V to 6-aminopenicillanate (6-APA). Shows high specificity towards penicillin V. Can use other beta-lactam substrates, including penicillin G, ampicillin, cephalexin, cloxacillin and dicloxacillin, but at a rate less than 10% of that of penicillin V. Does not show any activity with glyco- or tauro-conjugated bile salts. The chain is Penicillin V acylase from Pectobacterium atrosepticum (strain SCRI 1043 / ATCC BAA-672) (Erwinia carotovora subsp. atroseptica).